The primary structure comprises 888 residues: Protein sey1 (888 aa).

The disordered stretch occupies residues 1-24 (MDMATSNINGHGDRPSPAARFPTA). Topologically, residues 1-771 (MDMATSNING…KRSAIGGVAQ (771 aa)) are cytoplasmic. Positions 76 to 315 (GFNYHLISVF…FEGGVFLPEY (240 aa)) constitute a GB1/RHD3-type G domain. 86–93 (GSQSTGKS) lines the GTP pocket. A disordered region spans residues 703–723 (GNTPASVDPKDEEDLTPIGGV). Acidic residues predominate over residues 712-723 (KDEEDLTPIGGV). Residues 724 to 745 (DEEEGKSLEEEMTVLSEAKRQD) adopt a coiled-coil conformation. A helical membrane pass occupies residues 772–792 (VPLYFYGLLLALGWNEIVAVL). The Lumenal segment spans residues 793–795 (RNP). A helical transmembrane segment spans residues 796 to 816 (IYFVFLILCGVAGYVTYTLNL). The Cytoplasmic segment spans residues 817–888 (WGPIIRMLNA…VREDEDVDEI (72 aa)).

This sequence belongs to the TRAFAC class dynamin-like GTPase superfamily. GB1/RHD3 GTPase family. RHD3 subfamily.

Its subcellular location is the endoplasmic reticulum membrane. Functionally, cooperates with the reticulon proteins and tubule-shaping DP1 family proteins to generate and maintain the structure of the tubular endoplasmic reticulum network. Has GTPase activity, which is required for its function in ER organization. This is Protein sey1 (sey1) from Sclerotinia sclerotiorum (strain ATCC 18683 / 1980 / Ss-1) (White mold).